We begin with the raw amino-acid sequence, 276 residues long: Dermonecrotic toxin LlSicTox-alphaIV1i (276 aa).

The active site involves histidine 5. Positions 25 and 27 each coordinate Mg(2+). Residue histidine 41 is the Nucleophile of the active site. 2 disulfide bridges follow: cysteine 45–cysteine 51 and cysteine 47–cysteine 193. Aspartate 85 contributes to the Mg(2+) binding site.

It belongs to the arthropod phospholipase D family. Class II subfamily. The cofactor is Mg(2+). As to expression, expressed by the venom gland.

It localises to the secreted. It carries out the reaction an N-(acyl)-sphingosylphosphocholine = an N-(acyl)-sphingosyl-1,3-cyclic phosphate + choline. The enzyme catalyses an N-(acyl)-sphingosylphosphoethanolamine = an N-(acyl)-sphingosyl-1,3-cyclic phosphate + ethanolamine. It catalyses the reaction a 1-acyl-sn-glycero-3-phosphocholine = a 1-acyl-sn-glycero-2,3-cyclic phosphate + choline. The catalysed reaction is a 1-acyl-sn-glycero-3-phosphoethanolamine = a 1-acyl-sn-glycero-2,3-cyclic phosphate + ethanolamine. In terms of biological role, dermonecrotic toxins cleave the phosphodiester linkage between the phosphate and headgroup of certain phospholipids (sphingolipid and lysolipid substrates), forming an alcohol (often choline) and a cyclic phosphate. This toxin acts on sphingomyelin (SM). It may also act on ceramide phosphoethanolamine (CPE), lysophosphatidylcholine (LPC) and lysophosphatidylethanolamine (LPE), but not on lysophosphatidylserine (LPS), and lysophosphatidylglycerol (LPG). It acts by transphosphatidylation, releasing exclusively cyclic phosphate products as second products. Induces dermonecrosis, hemolysis, increased vascular permeability, edema, inflammatory response, and platelet aggregation. The chain is Dermonecrotic toxin LlSicTox-alphaIV1i from Loxosceles laeta (South American recluse spider).